The chain runs to 490 residues: Pleckstrin homology domain-containing family O member 2 (490 aa).

Positions 18 to 119 constitute a PH domain; that stretch reads MVDKAGWIKK…WIKALNEGIN (102 aa). 2 positions are modified to phosphoserine: S164 and S167. A disordered region spans residues 173-402; sequence LDLDVPDSGP…DLLGEGPRHP (230 aa). A compositionally biased stretch (low complexity) spans 230 to 243; that stretch reads APTPVSASSEVSPE. T232 carries the post-translational modification Phosphothreonine. S235, S237, and S238 each carry phosphoserine. Acidic residues predominate over residues 244 to 257; it reads SQEDSETPAEEDSG. At S273 the chain carries Phosphoserine. Residues 277-297 are compositionally biased toward low complexity; it reads PSPQEAPAAESAEPSQAPCSE. Phosphothreonine occurs at positions 298 and 311. Residues S390 and S468 each carry the phosphoserine modification. Positions 439–481 form a coiled coil; sequence SAETLLSQAVEQLRQATQVLQEMRDLGELSQEAPGLREKRKEL.

The sequence is that of Pleckstrin homology domain-containing family O member 2 (PLEKHO2) from Homo sapiens (Human).